The following is a 247-amino-acid chain: Probable transcriptional regulatory protein DvMF_3201 (247 aa).

The tract at residues 1–21 (MAGHSKWANIQHRKGRQDAKR) is disordered.

The protein belongs to the TACO1 family.

Its subcellular location is the cytoplasm. In Nitratidesulfovibrio vulgaris (strain DSM 19637 / Miyazaki F) (Desulfovibrio vulgaris), this protein is Probable transcriptional regulatory protein DvMF_3201.